We begin with the raw amino-acid sequence, 172 residues long: MNKRNKVKQLNRSADHRKAMIQNMVISLLRHERIESSVAKLKVARSYAERIITRAKRNLDANLANLDEQKKNAAILHNTRYLYSHLGDQEIVTKLLKDLANRYAERVGGYTRIIRLVNRPSDNTAMGILELVDRKTQDELKAEAKAKREEKKPAKKEEKPKKAKKEKAAASN.

The segment covering 140–160 (LKAEAKAKREEKKPAKKEEKP) has biased composition (basic and acidic residues). A disordered region spans residues 140-172 (LKAEAKAKREEKKPAKKEEKPKKAKKEKAAASN).

It belongs to the bacterial ribosomal protein bL17 family. In terms of assembly, part of the 50S ribosomal subunit. Contacts protein L32.

In Leptospira biflexa serovar Patoc (strain Patoc 1 / Ames), this protein is Large ribosomal subunit protein bL17.